The sequence spans 303 residues: Taste receptor type 2 member 13 (303 aa).

Topologically, residues 1 to 7 are extracellular; that stretch reads MESALPS. Residues 8–28 form a helical membrane-spanning segment; it reads IFTLVIIAEFIIGNLSNGFIV. Over 29-55 the chain is Cytoplasmic; the sequence is LINCIDWVSKRELSSVDKLLIILAISR. The chain crosses the membrane as a helical span at residues 56-76; it reads IGLIWEILVSWFLALHYLAIF. Topologically, residues 77–85 are extracellular; it reads VSGTGLRIM. A helical membrane pass occupies residues 86 to 106; it reads IFSWIVSNHFNLWLATIFSIF. Topologically, residues 107-128 are cytoplasmic; sequence YLLKIASFSSPAFLYLKWRVNK. The helical transmembrane segment at 129-149 threads the bilayer; it reads VILMILLGTLVFLFLNLIQIN. The Extracellular segment spans residues 150-184; it reads MHIKDWLDRYERNTTWNFSMSDFETFSVSVKFTMT. Residues N162 and N166 are each glycosylated (N-linked (GlcNAc...) asparagine). Residues 185–205 form a helical membrane-spanning segment; the sequence is MFSLTPFTVAFISFLLLIFSL. Residues 206–232 are Cytoplasmic-facing; the sequence is QKHLQKMQLNYKGHRDPRTKVHTNALK. Residues 233-253 traverse the membrane as a helical segment; the sequence is IVISFLLFYASFFLCVLISWI. The Extracellular segment spans residues 254–261; it reads SELYQNTV. A helical membrane pass occupies residues 262-282; that stretch reads IYMLCETIGVFSPSSHSFLLI. At 283 to 303 the chain is on the cytoplasmic side; that stretch reads LGNAKLRQAFLLVAAKVWAKR.

Belongs to the G-protein coupled receptor T2R family. As to expression, expressed in subsets of taste receptor cells of the tongue and palate epithelium and exclusively in gustducin-positive cells.

It localises to the membrane. Receptor that may play a role in the perception of bitterness and is gustducin-linked. May play a role in sensing the chemical composition of the gastrointestinal content. The activity of this receptor may stimulate alpha gustducin, mediate PLC-beta-2 activation and lead to the gating of TRPM5. The sequence is that of Taste receptor type 2 member 13 (TAS2R13) from Homo sapiens (Human).